The sequence spans 230 residues: Modulator of macroautophagy TMEM150B-A (230 aa).

A topological domain (cytoplasmic) is located at residue methionine 1. The helical transmembrane segment at 2–22 (WAWALLPICLTIWATAGIWIV) threads the bilayer. The Extracellular portion of the chain corresponds to 23-50 (YGMSVSNGSVNLSDGFPYISLCGTDPPQ). 2 N-linked (GlcNAc...) asparagine glycosylation sites follow: asparagine 29 and asparagine 33. The chain crosses the membrane as a helical span at residues 51 to 71 (SCVFGQVLNVGAMLGVWISAI). Residues 72 to 83 (RFQQIRDYNCHS) are Cytoplasmic-facing. The helical transmembrane segment at 84-104 (VLNSVSLAMGILCALGTSIVG) threads the bilayer. Topologically, residues 105-115 (NFQQSNQLETH) are extracellular. Residues 116–136 (LAGAFLAFVIGNIYFWMQTAL) traverse the membrane as a helical segment. Residues 137–150 (TYMVKPTHGGCYIG) lie on the Cytoplasmic side of the membrane. A helical membrane pass occupies residues 151–171 (PIRFCLSVACTALIVLMAVFL). Topologically, residues 172–183 (KMNMKSISAICE) are extracellular. A helical transmembrane segment spans residues 184 to 204 (WIVAMILFLLYGLFAVDFWHL). The Cytoplasmic portion of the chain corresponds to 205 to 230 (DGHYFHVKKRTVIPNEMQVSTVTLSI).

This sequence belongs to the DRAM/TMEM150 family.

The protein localises to the cell membrane. It localises to the endosome membrane. Its subcellular location is the cytoplasmic vesicle. The protein resides in the autophagosome membrane. Modulator of macroautophagy that causes accumulation of autophagosomes under basal conditions and enhances autophagic flux. Represses cell death and promotes long-term clonogenic survival of cells grown in the absence of glucose in a macroautophagy-independent manner. May have some role in extracellular matrix engulfment or growth factor receptor recycling, both of which can modulate cell survival. This Xenopus laevis (African clawed frog) protein is Modulator of macroautophagy TMEM150B-A.